The primary structure comprises 729 residues: Subtilisin-like protease SBT4.3 (729 aa).

Residues 1–23 (MAKLSTPLYLICLAFIFTRDVSA) form the signal peptide. Positions 24–109 (NDYRQASSVY…VFPSKSHELT (86 aa)) are cleaved as a propeptide — activation peptide. In terms of domain architecture, Inhibitor I9 spans 32-108 (VYIVYMGTLP…SVFPSKSHEL (77 aa)). The N-linked (GlcNAc...) asparagine glycan is linked to asparagine 82. In terms of domain architecture, Peptidase S8 spans 113–580 (SWDFVGFGEK…SGQINPTKAS (468 aa)). Active-site charge relay system residues include aspartate 139 and histidine 196. N-linked (GlcNAc...) asparagine glycosylation is found at asparagine 275, asparagine 348, asparagine 359, and asparagine 363. Residues 350–436 (TKFPIVYGQN…LGFEDYKSIK (87 aa)) enclose the PA domain. Serine 521 functions as the Charge relay system in the catalytic mechanism. N-linked (GlcNAc...) asparagine glycosylation is found at asparagine 614, asparagine 642, and asparagine 656.

It belongs to the peptidase S8 family. In terms of processing, the C-terminal propeptide is autocleaved.

The protein resides in the secreted. The polypeptide is Subtilisin-like protease SBT4.3 (Arabidopsis thaliana (Mouse-ear cress)).